The sequence spans 203 residues: HTH-type transcriptional regulator BetI (203 aa).

One can recognise an HTH tetR-type domain in the interval 8–68 (PVRRKALVDA…ATIRSLLGKL (61 aa)). The segment at residues 31–50 (TMSEIARTAGVSPALAHHYF) is a DNA-binding region (H-T-H motif).

It participates in amine and polyamine biosynthesis; betaine biosynthesis via choline pathway [regulation]. In terms of biological role, repressor involved in the biosynthesis of the osmoprotectant glycine betaine. It represses transcription of the choline transporter BetT and the genes of BetAB involved in the synthesis of glycine betaine. The chain is HTH-type transcriptional regulator BetI from Rhizobium meliloti (strain 1021) (Ensifer meliloti).